The primary structure comprises 299 residues: Protease HtpX homolog (299 aa).

The next 2 membrane-spanning stretches (helical) occupy residues 16–36 and 38–58; these read VMAAFVILLAVIGLAVGYVFF and SAIAGLLVALIAAVFYMVLMI. Histidine 144 serves as a coordination point for Zn(2+). Residue glutamate 145 is part of the active site. Histidine 148 contacts Zn(2+). Transmembrane regions (helical) follow at residues 159–179 and 198–218; these read IALALTAAISLLVNWGMNAFW and VLLMILAIVVIILAPLAASLV. Glutamate 227 lines the Zn(2+) pocket.

Belongs to the peptidase M48B family. It depends on Zn(2+) as a cofactor.

It localises to the cell membrane. The protein is Protease HtpX homolog of Lactiplantibacillus plantarum (strain ATCC BAA-793 / NCIMB 8826 / WCFS1) (Lactobacillus plantarum).